A 340-amino-acid polypeptide reads, in one-letter code: Ketol-acid reductoisomerase (NADP(+)) (340 aa).

The KARI N-terminal Rossmann domain maps to 3–182; the sequence is VTMYYEDDVE…GCARVGIIET (180 aa). NADP(+) contacts are provided by residues 26–29, Arg-49, Ser-53, and 83–86; these read YGSQ and DELQ. His-108 is an active-site residue. Residue Gly-134 coordinates NADP(+). Positions 183 to 328 constitute a KARI C-terminal knotted domain; sequence TFKEETEEDL…AELRKAMPFT (146 aa). Mg(2+)-binding residues include Asp-191, Glu-195, Glu-227, and Glu-231. Residue Ser-252 coordinates substrate.

Belongs to the ketol-acid reductoisomerase family. It depends on Mg(2+) as a cofactor.

It catalyses the reaction (2R)-2,3-dihydroxy-3-methylbutanoate + NADP(+) = (2S)-2-acetolactate + NADPH + H(+). The catalysed reaction is (2R,3R)-2,3-dihydroxy-3-methylpentanoate + NADP(+) = (S)-2-ethyl-2-hydroxy-3-oxobutanoate + NADPH + H(+). It functions in the pathway amino-acid biosynthesis; L-isoleucine biosynthesis; L-isoleucine from 2-oxobutanoate: step 2/4. It participates in amino-acid biosynthesis; L-valine biosynthesis; L-valine from pyruvate: step 2/4. Functionally, involved in the biosynthesis of branched-chain amino acids (BCAA). Catalyzes an alkyl-migration followed by a ketol-acid reduction of (S)-2-acetolactate (S2AL) to yield (R)-2,3-dihydroxy-isovalerate. In the isomerase reaction, S2AL is rearranged via a Mg-dependent methyl migration to produce 3-hydroxy-3-methyl-2-ketobutyrate (HMKB). In the reductase reaction, this 2-ketoacid undergoes a metal-dependent reduction by NADPH to yield (R)-2,3-dihydroxy-isovalerate. The polypeptide is Ketol-acid reductoisomerase (NADP(+)) (Lactococcus lactis subsp. lactis (strain IL1403) (Streptococcus lactis)).